A 468-amino-acid polypeptide reads, in one-letter code: Phosphoglucosamine mutase (468 aa).

The Phosphoserine intermediate role is filled by Ser-112. Residues Ser-112, Asp-254, Asp-256, and Asp-258 each coordinate Mg(2+). Ser-112 bears the Phosphoserine mark.

The protein belongs to the phosphohexose mutase family. Mg(2+) is required as a cofactor. Post-translationally, activated by phosphorylation.

The enzyme catalyses alpha-D-glucosamine 1-phosphate = D-glucosamine 6-phosphate. Functionally, catalyzes the conversion of glucosamine-6-phosphate to glucosamine-1-phosphate. The polypeptide is Phosphoglucosamine mutase (Prochlorococcus marinus (strain MIT 9313)).